The following is a 551-amino-acid chain: GMP synthase [glutamine-hydrolyzing] (551 aa).

The 194-residue stretch at 40–233 (KILIVDFGSQ…VRKIAGLTGD (194 aa)) folds into the Glutamine amidotransferase type-1 domain. Cys-117 acts as the Nucleophile in catalysis. Active-site residues include His-207 and Glu-209. The region spanning 234-426 (WTMRAFREEE…LGLPEIFVGR (193 aa)) is the GMPS ATP-PPase domain. 261–267 (SGGVDSA) is an ATP binding site.

As to quaternary structure, homodimer.

The catalysed reaction is XMP + L-glutamine + ATP + H2O = GMP + L-glutamate + AMP + diphosphate + 2 H(+). Its pathway is purine metabolism; GMP biosynthesis; GMP from XMP (L-Gln route): step 1/1. Functionally, catalyzes the synthesis of GMP from XMP. The polypeptide is GMP synthase [glutamine-hydrolyzing] (Bradyrhizobium diazoefficiens (strain JCM 10833 / BCRC 13528 / IAM 13628 / NBRC 14792 / USDA 110)).